The following is a 458-amino-acid chain: GDP-fucose protein O-fucosyltransferase 3 (458 aa).

The Cytoplasmic portion of the chain corresponds to 1–11; the sequence is MRRISVKKLCS. A helical; Signal-anchor for type II membrane protein membrane pass occupies residues 12 to 32; sequence FCLCACAFAFLVMTFQVIELL. At 33 to 458 the chain is on the lumenal side; that stretch reads GQFEQTEHRQ…TQFWREVFTD (426 aa). Residues asparagine 92, asparagine 150, and asparagine 300 are each glycosylated (N-linked (GlcNAc...) asparagine). Cysteine 371 and cysteine 374 are oxidised to a cystine. An N-linked (GlcNAc...) asparagine glycan is attached at asparagine 445.

This sequence belongs to the glycosyltransferase 10 family.

The protein localises to the endoplasmic reticulum membrane. The catalysed reaction is L-threonyl-[protein] + GDP-beta-L-fucose = 3-O-(alpha-L-fucosyl)-L-threonyl-[protein] + GDP + H(+). The enzyme catalyses L-seryl-[protein] + GDP-beta-L-fucose = 3-O-(alpha-L-fucosyl)-L-seryl-[protein] + GDP + H(+). It functions in the pathway protein modification; protein glycosylation. In terms of biological role, protein O-fucosyltransferase that specifically catalyzes O-fucosylation of serine or threonine residues in EMI domains of target proteins. Attaches fucose through an O-glycosidic linkage. O-fucosylation of EMI domain-containing proteins may be required for facilitating protein folding and secretion. The sequence is that of GDP-fucose protein O-fucosyltransferase 3 (fut10) from Danio rerio (Zebrafish).